We begin with the raw amino-acid sequence, 149 residues long: L-alanine exporter AlaE (149 aa).

The next 4 membrane-spanning stretches (helical) occupy residues 16 to 36 (FAMVVYCSVVNMLIEIFLSGM), 46 to 66 (LVAIPVNILIAWPYGMYRDAI), 85 to 105 (VLAYVTFQSPVYVAILLTVGA), and 112 to 132 (AAVSSNIVISMLMGAVYGYFL).

Belongs to the AlaE exporter family.

It localises to the cell inner membrane. Its function is as follows. Exports L-alanine. This Citrobacter koseri (strain ATCC BAA-895 / CDC 4225-83 / SGSC4696) protein is L-alanine exporter AlaE.